We begin with the raw amino-acid sequence, 596 residues long: PDZ and LIM domain protein 5 (596 aa).

S2 carries the post-translational modification N-acetylserine. S2 carries the post-translational modification Phosphoserine. A PDZ domain is found at 2 to 85; that stretch reads SNYSVSLVGP…SLNMTLQRAS (84 aa). K89 bears the N6-acetyllysine; alternate mark. At K89 the chain carries N6-succinyllysine; alternate. Residue K89 forms a Glycyl lysine isopeptide (Lys-Gly) (interchain with G-Cter in SUMO2); alternate linkage. Residues S111, S134, and S137 each carry the phosphoserine modification. Disordered stretches follow at residues 121-165, 196-240, and 255-340; these read NNMA…SPSP, AGKT…GPPR, and THSD…RPGV. A compositionally biased stretch (polar residues) spans 134–143; sequence SVSSPKVTSI. Residues 144–165 show a composition bias toward low complexity; the sequence is PSPSSAFTPAHATTSSHASPSP. Composition is skewed to polar residues over residues 205 to 219 and 226 to 237; these read RQPT…TSQE and RGSQGDSKQQNG. A phosphoserine mark is found at S228 and S260. Composition is skewed to basic and acidic residues over residues 258–273 and 293–304; these read DASK…DWRP and EHLKESEADNTK. Residues 305 to 335 show a composition bias toward polar residues; it reads KANNSQEPSPQLASSVASTRSMPESLDSPTS. Residues S309, S313, and S322 each carry the phosphoserine modification. K350 carries the post-translational modification N6-acetyllysine. The interval 354 to 381 is disordered; sequence STGVIKSPSWQRPNQGVPSTGRISNSAT. Phosphoserine occurs at positions 360 and 362. Positions 361–381 are enriched in polar residues; that stretch reads PSWQRPNQGVPSTGRISNSAT. 3 consecutive LIM zinc-binding domains span residues 418–477, 477–536, and 536–596; these read PMCA…FFAP, PECG…LFGT, and TICH…SVNF.

Interacts with various PKC isoforms through the LIM domains. Interacts with actin and alpha-actinin through the PDZ domain. Interacts (via LIM domains) with SIPA1L1/SPAR; this interaction may occur preferentially with isoform 1. In terms of tissue distribution, heart and skeletal muscle specific. Expression is commonly increased in the brain of patients with bipolar disorder, schizophrenia, and major depression.

It localises to the postsynaptic density. Its subcellular location is the presynapse. It is found in the postsynapse. The protein localises to the cytoplasm. The protein resides in the cytosol. Its function is as follows. May play an important role in the heart development by scaffolding PKC to the Z-disk region. May play a role in the regulation of cardiomyocyte expansion. Isoforms lacking the LIM domains may negatively modulate the scaffolding activity of isoform 1. Overexpression promotes the development of heart hypertrophy. Contributes to the regulation of dendritic spine morphogenesis in neurons. May be required to restrain postsynaptic growth of excitatory synapses. Isoform 1, but not isoform 2, expression favors spine thinning and elongation. The chain is PDZ and LIM domain protein 5 from Homo sapiens (Human).